The primary structure comprises 270 residues: Putative methylsterol monooxygenase DDB_G0269788 (270 aa).

3 consecutive transmembrane segments (helical) span residues 31–51 (FIAH…CDFM), 82–102 (IFVQ…IGLS), and 110–130 (IPYL…YFYW). Residues 118-249 (ACCFLIEDFY…FTYLDKIFGT (132 aa)) enclose the Fatty acid hydroxylase domain. The short motif at 132 to 136 (HRALH) is the Histidine box-1 element. Residues 145 to 149 (HKVHH) carry the Histidine box-2 motif. The short motif at 224–230 (FHDFHHE) is the Histidine box-3 element.

This sequence belongs to the sterol desaturase family. The cofactor is Fe cation.

The protein resides in the endoplasmic reticulum membrane. It carries out the reaction 4,4-dimethyl-5alpha-cholest-7-en-3beta-ol + 6 Fe(II)-[cytochrome b5] + 3 O2 + 5 H(+) = 4alpha-carboxy-4beta-methyl-5alpha-cholest-7-ene-3beta-ol + 6 Fe(III)-[cytochrome b5] + 4 H2O. The protein operates within steroid biosynthesis; zymosterol biosynthesis; zymosterol from lanosterol: step 3/6. The chain is Putative methylsterol monooxygenase DDB_G0269788 from Dictyostelium discoideum (Social amoeba).